The chain runs to 498 residues: Lysine--tRNA ligase (498 aa).

Residues glutamate 409 and glutamate 416 each contribute to the Mg(2+) site.

It belongs to the class-II aminoacyl-tRNA synthetase family. In terms of assembly, homodimer. Mg(2+) serves as cofactor.

It is found in the cytoplasm. The catalysed reaction is tRNA(Lys) + L-lysine + ATP = L-lysyl-tRNA(Lys) + AMP + diphosphate. This Dichelobacter nodosus (strain VCS1703A) protein is Lysine--tRNA ligase.